The primary structure comprises 457 residues: Argininosuccinate lyase (457 aa).

This sequence belongs to the lyase 1 family. Argininosuccinate lyase subfamily.

The protein resides in the cytoplasm. The enzyme catalyses 2-(N(omega)-L-arginino)succinate = fumarate + L-arginine. It participates in amino-acid biosynthesis; L-arginine biosynthesis; L-arginine from L-ornithine and carbamoyl phosphate: step 3/3. The sequence is that of Argininosuccinate lyase from Pectobacterium atrosepticum (strain SCRI 1043 / ATCC BAA-672) (Erwinia carotovora subsp. atroseptica).